The sequence spans 59 residues: Cytochrome c oxidase subunit 7 (59 aa).

Over 1–24 the chain is Mitochondrial matrix; it reads MKNTIVQQQRFLQSIHKPTYLQRP. The chain crosses the membrane as a helical span at residues 25 to 47; it reads GSFALVYPYYAVMAGLGLYSLYA. Topologically, residues 48 to 59 are mitochondrial intermembrane; sequence SGRVIFGKKDAF.

The protein belongs to the cytochrome c oxidase subunit 7 family. As to quaternary structure, component of the cytochrome c oxidase (complex IV, CIV), a multisubunit enzyme composed of a catalytic core of 3 subunits and several supernumerary subunits. The complex exists as a monomer or a dimer and forms supercomplexes (SCs) in the inner mitochondrial membrane with ubiquinol-cytochrome c oxidoreductase (cytochrome b-c1 complex, complex III, CIII).

Its subcellular location is the mitochondrion inner membrane. It participates in energy metabolism; oxidative phosphorylation. Component of the cytochrome c oxidase, the last enzyme in the mitochondrial electron transport chain which drives oxidative phosphorylation. The respiratory chain contains 3 multisubunit complexes succinate dehydrogenase (complex II, CII), ubiquinol-cytochrome c oxidoreductase (cytochrome b-c1 complex, complex III, CIII) and cytochrome c oxidase (complex IV, CIV), that cooperate to transfer electrons derived from NADH and succinate to molecular oxygen, creating an electrochemical gradient over the inner membrane that drives transmembrane transport and the ATP synthase. Cytochrome c oxidase is the component of the respiratory chain that catalyzes the reduction of oxygen to water. Electrons originating from reduced cytochrome c in the intermembrane space (IMS) are transferred via the dinuclear copper A center (CU(A)) of subunit 2 and heme A of subunit 1 to the active site in subunit 1, a binuclear center (BNC) formed by heme A3 and copper B (CU(B)). The BNC reduces molecular oxygen to 2 water molecules using 4 electrons from cytochrome c in the IMS and 4 protons from the mitochondrial matrix. The chain is Cytochrome c oxidase subunit 7 (cox7) from Schizosaccharomyces pombe (strain 972 / ATCC 24843) (Fission yeast).